We begin with the raw amino-acid sequence, 258 residues long: Acyl-[acyl-carrier-protein]--UDP-N-acetylglucosamine O-acyltransferase (258 aa).

The protein belongs to the transferase hexapeptide repeat family. LpxA subfamily. In terms of assembly, homotrimer.

The protein resides in the cytoplasm. The catalysed reaction is a (3R)-hydroxyacyl-[ACP] + UDP-N-acetyl-alpha-D-glucosamine = a UDP-3-O-[(3R)-3-hydroxyacyl]-N-acetyl-alpha-D-glucosamine + holo-[ACP]. The protein operates within glycolipid biosynthesis; lipid IV(A) biosynthesis; lipid IV(A) from (3R)-3-hydroxytetradecanoyl-[acyl-carrier-protein] and UDP-N-acetyl-alpha-D-glucosamine: step 1/6. Functionally, involved in the biosynthesis of lipid A, a phosphorylated glycolipid that anchors the lipopolysaccharide to the outer membrane of the cell. The polypeptide is Acyl-[acyl-carrier-protein]--UDP-N-acetylglucosamine O-acyltransferase (Pseudomonas syringae pv. syringae (strain B728a)).